Consider the following 395-residue polypeptide: N5-carboxyaminoimidazole ribonucleotide synthase (395 aa).

ATP is bound by residues Lys-109, Lys-149, 184–187, Glu-192, and 268–269; these read EEFI and NE. Residues 113-298 enclose the ATP-grasp domain; sequence RQLLTRLGLP…QFEQQLRAIA (186 aa).

Belongs to the PurK/PurT family. In terms of assembly, homodimer.

It carries out the reaction 5-amino-1-(5-phospho-beta-D-ribosyl)imidazole + hydrogencarbonate + ATP = 5-carboxyamino-1-(5-phospho-D-ribosyl)imidazole + ADP + phosphate + 2 H(+). Its pathway is purine metabolism; IMP biosynthesis via de novo pathway; 5-amino-1-(5-phospho-D-ribosyl)imidazole-4-carboxylate from 5-amino-1-(5-phospho-D-ribosyl)imidazole (N5-CAIR route): step 1/2. Its function is as follows. Catalyzes the ATP-dependent conversion of 5-aminoimidazole ribonucleotide (AIR) and HCO(3)(-) to N5-carboxyaminoimidazole ribonucleotide (N5-CAIR). The polypeptide is N5-carboxyaminoimidazole ribonucleotide synthase (Synechococcus elongatus (strain ATCC 33912 / PCC 7942 / FACHB-805) (Anacystis nidulans R2)).